A 273-amino-acid polypeptide reads, in one-letter code: 2-dehydro-3-deoxyphosphooctonate aldolase (273 aa).

This sequence belongs to the KdsA family.

It localises to the cytoplasm. It catalyses the reaction D-arabinose 5-phosphate + phosphoenolpyruvate + H2O = 3-deoxy-alpha-D-manno-2-octulosonate-8-phosphate + phosphate. It functions in the pathway carbohydrate biosynthesis; 3-deoxy-D-manno-octulosonate biosynthesis; 3-deoxy-D-manno-octulosonate from D-ribulose 5-phosphate: step 2/3. Its pathway is bacterial outer membrane biogenesis; lipopolysaccharide biosynthesis. This is 2-dehydro-3-deoxyphosphooctonate aldolase from Geobacter sp. (strain M21).